Here is a 147-residue protein sequence, read N- to C-terminus: Siroheme decarboxylase NirG subunit (147 aa).

Belongs to the Ahb/Nir family. As to quaternary structure, probably forms a complex composed of NirD, NirL, NirG and NirH. All proteins are required for the total conversion of siroheme to didecarboxysiroheme.

It catalyses the reaction siroheme + 2 H(+) = 12,18-didecarboxysiroheme + 2 CO2. It functions in the pathway porphyrin-containing compound metabolism. Functionally, involved in heme d1 biosynthesis. Catalyzes the decarboxylation of siroheme into didecarboxysiroheme. The chain is Siroheme decarboxylase NirG subunit from Stutzerimonas stutzeri (Pseudomonas stutzeri).